A 249-amino-acid chain; its full sequence is Methionine aminopeptidase 2 (249 aa).

Residue H76 participates in substrate binding. A divalent metal cation-binding residues include D94, D105, and H168. H175 is a substrate binding site. A divalent metal cation is bound by residues E202 and E233.

Monomer. Co(2+) is required as a cofactor. It depends on Zn(2+) as a cofactor. Mn(2+) serves as cofactor. Requires Fe(2+) as cofactor.

Its subcellular location is the cytoplasm. The enzyme catalyses Release of N-terminal amino acids, preferentially methionine, from peptides and arylamides.. Its function is as follows. Removes the N-terminal methionine from nascent proteins. The N-terminal methionine is often cleaved when the second residue in the primary sequence is small and uncharged (Met-Ala-, Cys, Gly, Pro, Ser, Thr, or Val). Requires deformylation of the N(alpha)-formylated initiator methionine before it can be hydrolyzed. The protein is Methionine aminopeptidase 2 of Bacillus subtilis (strain 168).